A 1856-amino-acid polypeptide reads, in one-letter code: Golgi-specific brefeldin A-resistance guanine nucleotide exchange factor 1 (1856 aa).

Positions 1–211 are DCB (dimerization and cyclophiln-binding); DCB:DCB domain and DCB:HUS domain interaction; it reads MVDKNIYIIQ…EPKSYVGTNM (211 aa). Residues 1 to 378 form an interaction with RAB1B region; it reads MVDKNIYIIQ…SVHDMDYVNP (378 aa). Disordered stretches follow at residues 215–256 and 291–370; these read KMRA…NGAT and DSGL…SASV. Positions 227 to 241 are enriched in basic residues; sequence WKKQKRSPRPPRHMT. Positions 316 to 328 are enriched in polar residues; it reads RESTTTESGSNEI. Phosphoserine occurs at positions 349 and 352. T505 is subject to Phosphothreonine. Positions 528-548 are HUS (homology upstream of Sec7); DCB:HUS domain interaction; the sequence is RIPSFVTELYINYDCDYYCAN. The segment at 601–626 is disordered; the sequence is QEKKETSRPSYEAVDSTQEANSTERA. Residues 615–625 are compositionally biased toward polar residues; sequence DSTQEANSTER. In terms of domain architecture, SEC7 spans 690-880; the sequence is ELIEIKNKKK…EDMYHAIKNE (191 aa). Residues 884-1370 form a phosphatidylinositol-phosphate binding; required for translocation to the leading edge and for ARF1 activation upon GPCR signaling region; the sequence is MPEEQTGLVR…LSRPSPSPLV (487 aa). Residues 1284–1294 are compositionally biased toward low complexity; the sequence is TARADAPDAGA. Positions 1284–1333 are disordered; the sequence is TARADAPDAGAQSDSELPSYHQNDVSLDRGYTSDSEVYTDHGRPGKIHRS. Positions 1295-1308 are enriched in polar residues; the sequence is QSDSELPSYHQNDV. A Phosphoserine modification is found at S1296. Y1314 bears the Phosphotyrosine mark. Residues S1316, S1318, and S1333 each carry the phosphoserine modification. T1335 is subject to Phosphothreonine; by AMPK. 3 disordered regions span residues 1430 to 1484, 1739 to 1806, and 1837 to 1856; these read CKSQ…EGVP, THLT…PPLI, and PVPL…SEVN. A compositionally biased stretch (basic and acidic residues) spans 1432–1446; that stretch reads SQDKRGKSHKYDSKG. Residues S1475 and S1781 each carry the phosphoserine modification. Residues 1775–1793 are compositionally biased toward low complexity; the sequence is SSSSPGSPVASSPSRLSPS.

As to quaternary structure, can form homodimers and probably homotetramers. Interacts with COPG1; the interaction is independent on ARF1 activation. Interacts with ARF1, ARF3, ARF4 and ARF5. Interacts with RAB1B (GTP-bound form); required for GBF1 membrane association. Interacts with GGA1, GGA2 and GGA3. Interacts with USO1. Interacts (via SEC7 domain) with PNPLA2 (via C-terminus); the interaction is direct. Can form homodimers and probably homotetramers. Interacts with COPG1; the interaction is independent on ARF1 activation. Interacts with ARF1, ARF3, ARF4 and ARF5. Interacts with RAB1B (GTP-bound form); required for GBF1 membrane association. Interacts with GGA1, GGA2 and GGA3. Interacts with USO1. Interacts (via SEC7 domain) with PNPLA2 (via C-terminus); the interaction is direct. Interacts with ARMH3.

It localises to the golgi apparatus. Its subcellular location is the cis-Golgi network. It is found in the endoplasmic reticulum-Golgi intermediate compartment. The protein localises to the trans-Golgi network. The protein resides in the cytoplasm. It localises to the lipid droplet. Its subcellular location is the membrane. Inhibited by brefeldin A (BFA). Inhibited by golgicide A (GCA). In terms of biological role, guanine-nucleotide exchange factor (GEF) for members of the Arf family of small GTPases involved in trafficking in the early secretory pathway; its GEF activity initiates the coating of nascent vesicles via the localized generation of activated ARFs through replacement of GDP with GTP. Recruitment to cis-Golgi membranes requires membrane association of Arf-GDP and can be regulated by ARF1, ARF3, ARF4 and ARF5. Involved in the recruitment of the COPI coat complex to cellular membranes such as the endoplasmic reticulum exit sites (ERES), and the endoplasmic reticulum-Golgi intermediate (ERGIC) and cis-Golgi compartments implicating ARF1 activation. Involved in COPI vesicle-dependent retrograde transport from the ERGIC and cis-Golgi compartments to the endoplasmic reticulum (ER). Involved in the trans-Golgi network recruitment of GGA1, GGA2, GGA3, BIG1, BIG2, and the AP-1 adaptor protein complex related to chlathrin-dependent transport; the function requires its GEF activity (probably at least in part on ARF4 and ARF5). Has GEF activity towards ARF1. Has in vitro GEF activity towards ARF5. Involved in the processing of PSAP. Required for the assembly of the Golgi apparatus. The AMPK-phosphorylated form is involved in Golgi disassembly during mitotis and under stress conditions. May be involved in the COPI vesicle-dependent recruitment of PNPLA2 to lipid droplets. In neutrophils, involved in G protein-coupled receptor (GPCR)-mediated chemotaxis und superoxide production. Proposed to be recruited by phosphatidylinositol-phosphates generated upon GPCR stimulation to the leading edge where it recruits and activates ARF1, and is involved in recruitment of GIT2 and the NADPH oxidase complex. Plays a role in maintaining mitochondrial morphology. The polypeptide is Golgi-specific brefeldin A-resistance guanine nucleotide exchange factor 1 (GBF1) (Cricetulus griseus (Chinese hamster)).